The primary structure comprises 397 residues: CCA-adding enzyme (397 aa).

ATP is bound by residues glycine 26 and arginine 29. 2 residues coordinate CTP: glycine 26 and arginine 29. 2 residues coordinate Mg(2+): aspartate 39 and aspartate 41. The ATP site is built by arginine 110, aspartate 153, arginine 156, arginine 159, and arginine 162. Residues arginine 110, aspartate 153, arginine 156, arginine 159, and arginine 162 each contribute to the CTP site.

Belongs to the tRNA nucleotidyltransferase/poly(A) polymerase family. Bacterial CCA-adding enzyme type 3 subfamily. Homodimer. It depends on Mg(2+) as a cofactor.

It catalyses the reaction a tRNA precursor + 2 CTP + ATP = a tRNA with a 3' CCA end + 3 diphosphate. The enzyme catalyses a tRNA with a 3' CCA end + 2 CTP + ATP = a tRNA with a 3' CCACCA end + 3 diphosphate. Functionally, catalyzes the addition and repair of the essential 3'-terminal CCA sequence in tRNAs without using a nucleic acid template. Adds these three nucleotides in the order of C, C, and A to the tRNA nucleotide-73, using CTP and ATP as substrates and producing inorganic pyrophosphate. tRNA 3'-terminal CCA addition is required both for tRNA processing and repair. Also involved in tRNA surveillance by mediating tandem CCA addition to generate a CCACCA at the 3' terminus of unstable tRNAs. While stable tRNAs receive only 3'-terminal CCA, unstable tRNAs are marked with CCACCA and rapidly degraded. The protein is CCA-adding enzyme of Bacillus cytotoxicus (strain DSM 22905 / CIP 110041 / 391-98 / NVH 391-98).